The following is a 143-amino-acid chain: Large ribosomal subunit protein uL11 (143 aa).

Belongs to the universal ribosomal protein uL11 family. Part of the ribosomal stalk of the 50S ribosomal subunit. Interacts with L10 and the large rRNA to form the base of the stalk. L10 forms an elongated spine to which L12 dimers bind in a sequential fashion forming a multimeric L10(L12)X complex. One or more lysine residues are methylated.

Functionally, forms part of the ribosomal stalk which helps the ribosome interact with GTP-bound translation factors. In Borrelia garinii subsp. bavariensis (strain ATCC BAA-2496 / DSM 23469 / PBi) (Borreliella bavariensis), this protein is Large ribosomal subunit protein uL11.